We begin with the raw amino-acid sequence, 496 residues long: Probable G-protein coupled receptor Mth-like 5 (496 aa).

The Extracellular portion of the chain corresponds to 1-219; sequence MLVKTLGAHF…SNFLLRKILN (219 aa). A glycan (N-linked (GlcNAc...) asparagine) is linked at asparagine 82. A helical membrane pass occupies residues 220-240; it reads PIFHGISLVILLVIAIIYFIL. The Cytoplasmic segment spans residues 241–246; that stretch reads PTLRDL. The chain crosses the membrane as a helical span at residues 247–267; that stretch reads VGNIVTTIAMCLMVSQAADLV. The Extracellular segment spans residues 268 to 276; sequence RIFTELTSH. The chain crosses the membrane as a helical span at residues 277–297; it reads VSFIVADIILCFSLLAAFFWL. Residues 298 to 327 are Cytoplasmic-facing; it reads NSFGFYIWKTFRSRNVFLRVTDGRKYCYYS. The chain crosses the membrane as a helical span at residues 328-348; sequence AYAWGCTATMAALAVFAHFFL. Residues 349 to 366 are Extracellular-facing; sequence DAESYKQEHMVGEQETIG. Residues 367–387 form a helical membrane-spanning segment; the sequence is WLGICIFFAPIACTILVNIFF. Over 388–411 the chain is Cytoplasmic; that stretch reads YVTTRKLINRRTVYGRIAHKLKAN. The helical transmembrane segment at 412 to 432 threads the bilayer; the sequence is FIMFSLMLLVMSIAWLFLIMS. Topologically, residues 433-438 are extracellular; sequence WLQMEG. Residues 439–459 form a helical membrane-spanning segment; sequence LLYAHIVVNALQTPLLLYICV. At 460–496 the chain is on the cytoplasmic side; sequence LRQRHVTFLLKKTCCYNEPPSANDWGDELHYMNGNDY.

The protein belongs to the G-protein coupled receptor 2 family. Mth subfamily.

The protein localises to the cell membrane. In Drosophila melanogaster (Fruit fly), this protein is Probable G-protein coupled receptor Mth-like 5 (mthl5).